Consider the following 424-residue polypeptide: Enolase (424 aa).

Q163 is a binding site for (2R)-2-phosphoglycerate. Catalysis depends on E205, which acts as the Proton donor. Mg(2+) contacts are provided by D242, E285, and D312. K337, R366, S367, and K388 together coordinate (2R)-2-phosphoglycerate. K337 acts as the Proton acceptor in catalysis.

Belongs to the enolase family. Mg(2+) is required as a cofactor.

The protein localises to the cytoplasm. It is found in the secreted. Its subcellular location is the cell surface. It catalyses the reaction (2R)-2-phosphoglycerate = phosphoenolpyruvate + H2O. The protein operates within carbohydrate degradation; glycolysis; pyruvate from D-glyceraldehyde 3-phosphate: step 4/5. Catalyzes the reversible conversion of 2-phosphoglycerate (2-PG) into phosphoenolpyruvate (PEP). It is essential for the degradation of carbohydrates via glycolysis. The chain is Enolase from Roseobacter denitrificans (strain ATCC 33942 / OCh 114) (Erythrobacter sp. (strain OCh 114)).